The primary structure comprises 201 residues: Small ribosomal subunit protein uS4c (201 aa).

Residues 20–43 are disordered; the sequence is GLTNKRPKSRNDPTNQSSSRKISQ. Over residues 31–41 the composition is skewed to polar residues; that stretch reads DPTNQSSSRKI. Residues 89–157 form the S4 RNA-binding domain; sequence MRLDNIIFRL…IGKNLDLSQK (69 aa).

It belongs to the universal ribosomal protein uS4 family. As to quaternary structure, part of the 30S ribosomal subunit. Contacts protein S5. The interaction surface between S4 and S5 is involved in control of translational fidelity.

Its subcellular location is the plastid. The protein resides in the chloroplast. Functionally, one of the primary rRNA binding proteins, it binds directly to 16S rRNA where it nucleates assembly of the body of the 30S subunit. In terms of biological role, with S5 and S12 plays an important role in translational accuracy. The chain is Small ribosomal subunit protein uS4c (rps4) from Cycas taitungensis (Prince sago).